The chain runs to 184 residues: TATA-box-binding protein (184 aa).

2 repeat units span residues 9-85 (IENI…IDKL) and 100-178 (VQNI…KKDL).

Belongs to the TBP family.

Its function is as follows. General factor that plays a role in the activation of archaeal genes transcribed by RNA polymerase. Binds specifically to the TATA box promoter element which lies close to the position of transcription initiation. In Picrophilus torridus (strain ATCC 700027 / DSM 9790 / JCM 10055 / NBRC 100828 / KAW 2/3), this protein is TATA-box-binding protein.